A 308-amino-acid chain; its full sequence is tRNA-cytidine(32) 2-sulfurtransferase (308 aa).

The PP-loop motif motif lies at 39–44 (SGGKDS). [4Fe-4S] cluster contacts are provided by C114, C117, and C205.

It belongs to the TtcA family. Homodimer. It depends on Mg(2+) as a cofactor. [4Fe-4S] cluster serves as cofactor.

It localises to the cytoplasm. The enzyme catalyses cytidine(32) in tRNA + S-sulfanyl-L-cysteinyl-[cysteine desulfurase] + AH2 + ATP = 2-thiocytidine(32) in tRNA + L-cysteinyl-[cysteine desulfurase] + A + AMP + diphosphate + H(+). Its pathway is tRNA modification. In terms of biological role, catalyzes the ATP-dependent 2-thiolation of cytidine in position 32 of tRNA, to form 2-thiocytidine (s(2)C32). The sulfur atoms are provided by the cysteine/cysteine desulfurase (IscS) system. This chain is tRNA-cytidine(32) 2-sulfurtransferase, found in Cupriavidus taiwanensis (strain DSM 17343 / BCRC 17206 / CCUG 44338 / CIP 107171 / LMG 19424 / R1) (Ralstonia taiwanensis (strain LMG 19424)).